Reading from the N-terminus, the 145-residue chain is Synaptojanin-2-binding protein (145 aa).

At methionine 1–glycine 117 the chain is on the cytoplasmic side. Residues glutamate 13–leucine 100 form the PDZ domain. Residues isoleucine 118–phenylalanine 138 form a helical; Anchor for type IV membrane protein membrane-spanning segment. Residues methionine 139 to leucine 145 are Mitochondrial intermembrane-facing.

In terms of assembly, binds (via the PDZ domain) to isoform 2A of SYNJ2 (via the unique motif in the C-terminus). Interacts (via C-terminus) with RALBP1. Interacts (via PDZ domain) with ACVR2A (via C-terminus) and ACVR2B (via C-terminus). Forms a ternary complex with ACVR2A and RALBP1. Interacts with MAPK12. Interacts with DLL1; enhances DLL1 protein stability, and promotes notch signaling in endothelial cells.

It localises to the mitochondrion outer membrane. It is found in the cytoplasm. Its subcellular location is the perinuclear region. Functionally, regulates endocytosis of activin type 2 receptor kinases through the Ral/RALBP1-dependent pathway and may be involved in suppression of activin-induced signal transduction. The sequence is that of Synaptojanin-2-binding protein from Bos taurus (Bovine).